The primary structure comprises 98 residues: NADH-ubiquinone oxidoreductase chain 4L (98 aa).

3 helical membrane passes run 1–21 (MPIIYMNIMLAFTISLLGMLT), 29–49 (SLLCLEGMMLSLFIMSTLMAL), and 58–78 (IVPIALLVFAACEAAVGLSLL).

The protein belongs to the complex I subunit 4L family. As to quaternary structure, core subunit of respiratory chain NADH dehydrogenase (Complex I) which is composed of 45 different subunits.

It localises to the mitochondrion inner membrane. The enzyme catalyses a ubiquinone + NADH + 5 H(+)(in) = a ubiquinol + NAD(+) + 4 H(+)(out). Functionally, core subunit of the mitochondrial membrane respiratory chain NADH dehydrogenase (Complex I) which catalyzes electron transfer from NADH through the respiratory chain, using ubiquinone as an electron acceptor. Part of the enzyme membrane arm which is embedded in the lipid bilayer and involved in proton translocation. This Presbytis melalophos (Mitred leaf monkey) protein is NADH-ubiquinone oxidoreductase chain 4L (MT-ND4L).